The chain runs to 78 residues: DNA-directed RNA polymerase subunit omega (78 aa).

This sequence belongs to the RNA polymerase subunit omega family. As to quaternary structure, the RNAP catalytic core consists of 2 alpha, 1 beta, 1 beta' and 1 omega subunit. When a sigma factor is associated with the core the holoenzyme is formed, which can initiate transcription.

It carries out the reaction RNA(n) + a ribonucleoside 5'-triphosphate = RNA(n+1) + diphosphate. Functionally, promotes RNA polymerase assembly. Latches the N- and C-terminal regions of the beta' subunit thereby facilitating its interaction with the beta and alpha subunits. The polypeptide is DNA-directed RNA polymerase subunit omega (Desulfovibrio desulfuricans (strain ATCC 27774 / DSM 6949 / MB)).